The following is a 160-amino-acid chain: Transcription elongation factor GreA (160 aa).

Residues 1-72 (MAEKTYPMTL…QISSLETKIR (72 aa)) are a coiled coil.

The protein belongs to the GreA/GreB family.

Its function is as follows. Necessary for efficient RNA polymerase transcription elongation past template-encoded arresting sites. The arresting sites in DNA have the property of trapping a certain fraction of elongating RNA polymerases that pass through, resulting in locked ternary complexes. Cleavage of the nascent transcript by cleavage factors such as GreA or GreB allows the resumption of elongation from the new 3'terminus. GreA releases sequences of 2 to 3 nucleotides. This is Transcription elongation factor GreA from Streptococcus gordonii (strain Challis / ATCC 35105 / BCRC 15272 / CH1 / DL1 / V288).